Reading from the N-terminus, the 760-residue chain is Prolyl endopeptidase FAP (760 aa).

The Cytoplasmic segment spans residues 1–4 (MKTW). The helical; Signal-anchor for type II membrane protein transmembrane segment at 5-25 (LKIVFGVATSAVLALLVMCIV) threads the bilayer. The Extracellular portion of the chain corresponds to 26–760 (LRPSRVHNSE…FLKQCFSLSD (735 aa)). Residues Asn-49, Asn-92, and Asn-99 are each glycosylated (N-linked (GlcNAc...) asparagine). 2 residues coordinate substrate: Glu-203 and Glu-204. N-linked (GlcNAc...) asparagine glycosylation is found at Asn-227 and Asn-314. 3 cysteine pairs are disulfide-bonded: Cys-321-Cys-332, Cys-438-Cys-441, and Cys-448-Cys-466. Residues 481–512 (TDQEIKILEDNKELENALKNIQLPKEEIKKLK) are a coiled coil. Ser-624 (charge relay system) is an active-site residue. Cys-643 and Cys-755 form a disulfide bridge. N-linked (GlcNAc...) asparagine glycosylation occurs at Asn-679. Residues Asp-702 and His-734 each act as charge relay system in the active site.

It belongs to the peptidase S9B family. Homodimer; homodimerization is required for activity of both plasma membrane and soluble forms. The monomer is inactive. Heterodimer with DPP4. Interacts with PLAUR; the interaction occurs at the cell surface of invadopodia membranes. Interacts with ITGB1. Interacts with ITGA3. Associates with integrin alpha-3/beta-1; the association occurs in a collagen-dependent manner at the cell surface of invadopodia membranes. Post-translationally, N-glycosylated. The N-terminus may be blocked.

The protein resides in the cell surface. It localises to the cell membrane. It is found in the cell projection. Its subcellular location is the lamellipodium membrane. The protein localises to the invadopodium membrane. The protein resides in the ruffle membrane. It localises to the membrane. It is found in the secreted. It catalyses the reaction Release of an N-terminal dipeptide, Xaa-Yaa-|-Zaa-, from a polypeptide, preferentially when Yaa is Pro, provided Zaa is neither Pro nor hydroxyproline.. It carries out the reaction Hydrolysis of Pro-|-Xaa &gt;&gt; Ala-|-Xaa in oligopeptides.. With respect to regulation, gelatinase activity is inhibited by serine-protease inhibitors, such as phenylmethylsulfonyl fluoride (PMSF), 4-(2-aminoethyl)-benzenesulfonyl fluoride hydrochloride (AEBSF), 4-amidino phenylsulfonyl fluoride (APSF) and diisopropyl fluorophosphate (DFP), N-ethylmaleimide (NEM) and phenylmethylsulfonyl fluoride (PMSF). Dipeptidyl peptidase activity is inhibited by 2,2'-azino-bis(3-ethylbenzthiazoline-6-sulfonic acid), diisopropylfluorophosphate (DFP). Prolyl endopeptidase activity is inhibited by the boronic acid peptide Ac-Gly-BoroPro, Ac-Gly-Pro-chloromethyl ketone and Thr-Ser-Gly-chloromethyl ketone. Functionally, cell surface glycoprotein serine protease that participates in extracellular matrix degradation and involved in many cellular processes including tissue remodeling, fibrosis, wound healing, inflammation and tumor growth. Both plasma membrane and soluble forms exhibit post-proline cleaving endopeptidase activity, with a marked preference for Ala/Ser-Gly-Pro-Ser/Asn/Ala consensus sequences, on substrate such as alpha-2-antiplasmin SERPINF2 and SPRY2. Degrade also gelatin, heat-denatured type I collagen, but not native collagen type I and IV, vibronectin, tenascin, laminin, fibronectin, fibrin or casein. Also has dipeptidyl peptidase activity, exhibiting the ability to hydrolyze the prolyl bond two residues from the N-terminus of synthetic dipeptide substrates provided that the penultimate residue is proline, with a preference for Ala-Pro, Ile-Pro, Gly-Pro, Arg-Pro and Pro-Pro. Natural neuropeptide hormones for dipeptidyl peptidase are the neuropeptide Y (NPY), peptide YY (PYY), substance P (TAC1) and brain natriuretic peptide 32 (NPPB). The plasma membrane form, in association with either DPP4, PLAUR or integrins, is involved in the pericellular proteolysis of the extracellular matrix (ECM), and hence promotes cell adhesion, migration and invasion through the ECM. Plays a role in tissue remodeling during development and wound healing. Participates in the cell invasiveness towards the ECM in malignant melanoma cancers. Enhances tumor growth progression by increasing angiogenesis, collagen fiber degradation and apoptosis and by reducing antitumor response of the immune system. Promotes glioma cell invasion through the brain parenchyma by degrading the proteoglycan brevican. Acts as a tumor suppressor in melanocytic cells through regulation of cell proliferation and survival in a serine protease activity-independent manner. In Bos taurus (Bovine), this protein is Prolyl endopeptidase FAP.